We begin with the raw amino-acid sequence, 347 residues long: High mobility group protein 20A (347 aa).

Polar residues-rich tracts occupy residues 1 to 10 (MENLMTSSTL) and 40 to 49 (SGATSSTNNP). 2 disordered regions span residues 1-113 (MENL…YVRF) and 179-211 (FSRKTQDRQKGKSHRQDAARQATHDHEKETEVK). Residues 55–66 (LSQGQLLQSESS) are compositionally biased toward low complexity. Positions 72-82 (NEQRHEDEQRS) are enriched in basic and acidic residues. The segment covering 83-96 (KRGGWSKGRKRKKP) has biased composition (basic residues). Residues 103–171 (PKSPLTGYVR…RYMKELEQYQ (69 aa)) constitute a DNA-binding region (HMG box). S105 is modified (phosphoserine). Positions 182–211 (KTQDRQKGKSHRQDAARQATHDHEKETEVK) are enriched in basic and acidic residues. A coiled-coil region spans residues 229–273 (SKAREAELRQLRKSNMEFEERNAALQKHVESMRTAVEKLEVDVIQ).

As to quaternary structure, interacts with DTNB. As to expression, ubiquitous.

It is found in the nucleus. Functionally, plays a role in neuronal differentiation as chromatin-associated protein. Acts as inhibitor of HMG20B. Overcomes the repressive effects of the neuronal silencer REST and induces the activation of neuronal-specific genes. Involved in the recruitment of the histone methyltransferase KMT2A/MLL1 and consequent increased methylation of histone H3 lysine 4. The protein is High mobility group protein 20A (HMG20A) of Homo sapiens (Human).